A 528-amino-acid chain; its full sequence is Phosphoenolpyruvate carboxykinase (ATP) (528 aa).

Substrate is bound by residues arginine 56, tyrosine 192, and lysine 198. ATP is bound by residues lysine 198, histidine 217, and 233–241; that span reads GLSGTGKTT. Residues lysine 198 and histidine 217 each contribute to the Mn(2+) site. Aspartate 254 lines the Mn(2+) pocket. ATP is bound by residues glutamate 282, arginine 319, and threonine 444. Arginine 319 serves as a coordination point for substrate.

This sequence belongs to the phosphoenolpyruvate carboxykinase (ATP) family. It depends on Mn(2+) as a cofactor.

It localises to the cytoplasm. The enzyme catalyses oxaloacetate + ATP = phosphoenolpyruvate + ADP + CO2. It participates in carbohydrate biosynthesis; gluconeogenesis. Its function is as follows. Involved in the gluconeogenesis. Catalyzes the conversion of oxaloacetate (OAA) to phosphoenolpyruvate (PEP) through direct phosphoryl transfer between the nucleoside triphosphate and OAA. This Bacillus anthracis (strain A0248) protein is Phosphoenolpyruvate carboxykinase (ATP).